Reading from the N-terminus, the 515-residue chain is Fatty acyl-CoA reductase 2 (515 aa).

The Cytoplasmic portion of the chain corresponds to 1–464; that stretch reads MSTIAAFYGG…KAKQRLKRLR (464 aa). Residues 465-484 traverse the membrane as a helical segment; sequence NIHYLFNTALFLIAWRLLIA. Over 485 to 515 the chain is Peroxisomal; it reads RSQMARNVWFFIVSFCYKFLSYFRASSTLKV.

Belongs to the fatty acyl-CoA reductase family.

Its subcellular location is the peroxisome membrane. The enzyme catalyses a long-chain fatty acyl-CoA + 2 NADPH + 2 H(+) = a long-chain primary fatty alcohol + 2 NADP(+) + CoA. It catalyses the reaction a very long-chain fatty acyl-CoA + 2 NADPH + 2 H(+) = a very long-chain primary fatty alcohol + 2 NADP(+) + CoA. It carries out the reaction an ultra-long-chain fatty acyl-CoA + 2 NADPH + 2 H(+) = an ultra long-chain primary fatty alcohol + 2 NADP(+) + CoA. The catalysed reaction is hexadecanoyl-CoA + 2 NADPH + 2 H(+) = hexadecan-1-ol + 2 NADP(+) + CoA. The enzyme catalyses octadecanoyl-CoA + 2 NADPH + 2 H(+) = octadecan-1-ol + 2 NADP(+) + CoA. It catalyses the reaction eicosanoyl-CoA + 2 NADPH + 2 H(+) = eicosan-1-ol + 2 NADP(+) + CoA. It carries out the reaction docosanoyl-CoA + 2 NADPH + 2 H(+) = docosan-1-ol + 2 NADP(+) + CoA. The catalysed reaction is tetracosanoyl-CoA + 2 NADPH + 2 H(+) = tetracosan-1-ol + 2 NADP(+) + CoA. The enzyme catalyses hexacosanoyl-CoA + 2 NADPH + 2 H(+) = hexacosan-1-ol + 2 NADP(+) + CoA. It catalyses the reaction octacosanoyl-CoA + 2 NADPH + 2 H(+) = octacosan-1-ol + 2 NADP(+) + CoA. It carries out the reaction triacontanoyl-CoA + 2 NADPH + 2 H(+) = triacontan-1-ol + 2 NADP(+) + CoA. The catalysed reaction is 18-methylnonadecanoyl-CoA + 2 NADPH + 2 H(+) = 18-methylnonadecan-1-ol + 2 NADP(+) + CoA. The enzyme catalyses 20-methylheneicosanoyl-CoA + 2 NADPH + 2 H(+) = 20-methylheneicosan-1-ol + 2 NADP(+) + CoA. It catalyses the reaction 22-methyltricosanoyl-CoA + 2 NADPH + 2 H(+) = 22-methyltricosan-1-ol + 2 NADP(+) + CoA. It carries out the reaction 24-methylpentacosanoyl-CoA + 2 NADPH + 2 H(+) = 24-methylpentacosan-1-ol + 2 NADP(+) + CoA. Catalyzes the reduction of saturated but not unsaturated C16 or C18 fatty acyl-CoA to fatty alcohols (FAls). A lower activity can be observed with shorter fatty acyl-CoA substrates. Can produce very long-chain and ultra long-chain FAls, regardless of whether they have a straight or branched chain. Involved in the production of ether lipids/plasmalogens and wax monoesters whose synthesis requires FAls as substrates. This is Fatty acyl-CoA reductase 2 from Homo sapiens (Human).